The chain runs to 489 residues: Dipeptide and tripeptide permease B (489 aa).

Residues 1-27 (MNKPASIGLLQQPKPFFMIFFVELWER) lie on the Cytoplasmic side of the membrane. The helical transmembrane segment at 28–48 (FGYYGVQGILAVYFVHKLGFS) threads the bilayer. Over 49-52 (QEQA) the chain is Periplasmic. A helical transmembrane segment spans residues 53-73 (FTTFGAFAALVYGLIAIGGYV). Residues 74–82 (GDHLLGTKR) lie on the Cytoplasmic side of the membrane. The chain crosses the membrane as a helical span at residues 83–103 (TIVLGAIVLTVGYFMTGLSIL). The Periplasmic portion of the chain corresponds to 104-106 (KPE). A helical transmembrane segment spans residues 107-127 (LIFYALGTIAVGNGLFKANPA). Topologically, residues 128–146 (SLLSKCYPPKDPRLDGAFT) are cytoplasmic. A helical transmembrane segment spans residues 147–167 (LFYMSINIGSLFSLAIAPVIA). Topologically, residues 168–171 (EKFG) are periplasmic. The chain crosses the membrane as a helical span at residues 172–192 (YAVTYNICGIGLIIALLVYVL). Residues 193-212 (YRNTVRNIGSEPDHRPINYK) lie on the Cytoplasmic side of the membrane. 2 helical membrane-spanning segments follow: residues 213–233 (NLLLVLAGTVTMVFVCAWLMH) and 234–254 (NVKIANIVLIGLSVVIVFIFF). Residues 255-267 (REAFKQDKVGRNK) are Cytoplasmic-facing. The helical transmembrane segment at 268-288 (MFVAFILMLQAIVFFILYAQM) threads the bilayer. The Periplasmic segment spans residues 289–311 (PTSLNFFAINNVHHQLLGFNINP). The chain crosses the membrane as a helical span at residues 312–332 (VSFQALNPFWIVVASPILAAL). The Cytoplasmic segment spans residues 333 to 350 (YTHWGSRSKDLTMPAKFT). Residues 351–371 (VGMFLCSLGFLTAAAAGLWFA) traverse the membrane as a helical segment. Residues 372 to 375 (DEQG) are Periplasmic-facing. The helical transmembrane segment at 376–396 (LTSPWFIVLVYLFQSLGELMI) threads the bilayer. Residues 397 to 419 (SALGLAMVAALVPQYLMGFILGM) lie on the Cytoplasmic side of the membrane. A helical membrane pass occupies residues 420–440 (WYLTQATSFLLGGYVAAFTAI). Residues 441-456 (PEGITDPLETLPVYTN) lie on the Periplasmic side of the membrane. A helical membrane pass occupies residues 457-477 (VFGKIGITTFIVAIIMAITVP). Over 478-489 (LLNRMMNGKQKA) the chain is Cytoplasmic.

Belongs to the major facilitator superfamily. Proton-dependent oligopeptide transporter (POT/PTR) (TC 2.A.17) family. DtpB subfamily.

It localises to the cell inner membrane. Its function is as follows. Proton-dependent permease that transports di- and tripeptides. The polypeptide is Dipeptide and tripeptide permease B (Photorhabdus asymbiotica subsp. asymbiotica (strain ATCC 43949 / 3105-77) (Xenorhabdus luminescens (strain 2))).